The primary structure comprises 400 residues: Lysophospholipid transporter LplT (400 aa).

The next 12 membrane-spanning stretches (helical) occupy residues 19–39 (VIVA…ATLA), 53–73 (VLQM…GQIA), 91–111 (AGAA…LVGI), 139–159 (LMEA…GVLA), 164–184 (IAAL…NLFI), 195–213 (SWRL…VVLW), 227–247 (LFWG…PVAL), 257–277 (YLNA…AKLV), 281–301 (TVSR…IFSL), 304–324 (ALLP…FFVV), 352–372 (NSAM…GVPA), and 373–393 (VAIG…LWIW).

It belongs to the major facilitator superfamily. LplT (TC 2.A.1.42) family.

It localises to the cell inner membrane. In terms of biological role, catalyzes the facilitated diffusion of 2-acyl-glycero-3-phosphoethanolamine (2-acyl-GPE) into the cell. The protein is Lysophospholipid transporter LplT of Salmonella heidelberg (strain SL476).